A 415-amino-acid polypeptide reads, in one-letter code: Histidine--tRNA ligase (415 aa).

It belongs to the class-II aminoacyl-tRNA synthetase family. As to quaternary structure, homodimer.

It localises to the cytoplasm. The enzyme catalyses tRNA(His) + L-histidine + ATP = L-histidyl-tRNA(His) + AMP + diphosphate + H(+). In Rhodospirillum rubrum (strain ATCC 11170 / ATH 1.1.1 / DSM 467 / LMG 4362 / NCIMB 8255 / S1), this protein is Histidine--tRNA ligase.